A 405-amino-acid polypeptide reads, in one-letter code: Cytoplasmic tRNA 2-thiolation protein 2 (405 aa).

Belongs to the CTU2/NCS2 family.

The protein localises to the cytoplasm. The protein operates within tRNA modification; 5-methoxycarbonylmethyl-2-thiouridine-tRNA biosynthesis. Its function is as follows. Plays a central role in 2-thiolation of mcm(5)S(2)U at tRNA wobble positions of tRNA(Lys), tRNA(Glu) and tRNA(Gln). May act by forming a heterodimer with NCS6/CTU1 that ligates sulfur from thiocarboxylated URM1 onto the uridine of tRNAs at wobble position. The sequence is that of Cytoplasmic tRNA 2-thiolation protein 2 from Drosophila pseudoobscura pseudoobscura (Fruit fly).